We begin with the raw amino-acid sequence, 694 residues long: Polynucleotide 3'-phosphatase ZDP (694 aa).

2 PARP-type zinc fingers span residues 50-132 and 165-247; these read VVAE…EQCG and VIAD…EVNK. Zn(2+)-binding residues include cysteine 62, cysteine 65, histidine 93, cysteine 96, cysteine 177, cysteine 180, histidine 208, and cysteine 211. Residues 266 to 331 form a disordered region; it reads AIADNELTEE…SPDSSKVISE (66 aa). Basic and acidic residues predominate over residues 302–321; it reads ESKKPASDEISEQKTKDVKN. Polar residues predominate over residues 322-331; it reads SPDSSKVISE. The segment at 328-410 adopts a PARP-type 3 zinc-finger fold; it reads VISEYAKSSR…ALKELVQQCG (83 aa). Positions 340, 343, 371, and 374 each coordinate Zn(2+).

This sequence in the C-terminal section; belongs to the DNA 3' phosphatase family. As to quaternary structure, interacts with ROS1 (via the central region). Binds to XRCC1.

It is found in the nucleus. The protein localises to the nucleoplasm. It catalyses the reaction a 3'end (2'-deoxyribonucleotide 3'-phosphate)-DNA + H2O = a 3'-end 2'-deoxyribonucleotide-DNA + phosphate. Activated by the presence of DNA. Stimulated by XRCC1. Nick-sensing 3'-phosphoesterase involved in a base excision repair pathway required for active DNA demethylation. The N-terminal DNA-binding domain binds specifically to gap sites and sharply bends the target DNA. Lacks 5'-kinase activity but is capable of 3'-phosphoglycolate end processing. Inactive on 3'-alpha,beta-unsaturated aldehyde (3'-dRP). Protects partially genes from transcriptional silencing by preventing promoter DNA hypermethylation. In Arabidopsis thaliana (Mouse-ear cress), this protein is Polynucleotide 3'-phosphatase ZDP (ZDP).